Consider the following 105-residue polypeptide: DNA-directed RNA polymerase subunit Rpo13 (105 aa).

Basic and acidic residues-rich tracts occupy residues 1-10 (MSEDDSKKEP) and 70-80 (FDDVARSYSKA). 2 disordered regions span residues 1–35 (MSEDDSKKEPEPEETEAEIKHEEISREEDDEGGEF) and 70–105 (FDDVARSYSKADKKKRRVEKKPKKGKVTKKSDEEEE). The segment covering 81-97 (DKKKRRVEKKPKKGKVT) has biased composition (basic residues).

Belongs to the archaeal Rpo13 RNA polymerase subunit family. Part of the 13-subunit RNA polymerase.

Its subcellular location is the cytoplasm. The enzyme catalyses RNA(n) + a ribonucleoside 5'-triphosphate = RNA(n+1) + diphosphate. In terms of biological role, DNA-dependent RNA polymerase catalyzes the transcription of DNA into RNA using the four ribonucleoside triphosphates as substrates. In vitro binds dsDNA but not ssDNA. This is DNA-directed RNA polymerase subunit Rpo13 from Sulfolobus acidocaldarius (strain ATCC 33909 / DSM 639 / JCM 8929 / NBRC 15157 / NCIMB 11770).